The sequence spans 878 residues: DNA mismatch repair protein MutS (878 aa).

Residue 626 to 633 (GPNMAGKS) coordinates ATP.

Belongs to the DNA mismatch repair MutS family.

In terms of biological role, this protein is involved in the repair of mismatches in DNA. It is possible that it carries out the mismatch recognition step. This protein has a weak ATPase activity. This chain is DNA mismatch repair protein MutS, found in Paracoccus denitrificans (strain Pd 1222).